The sequence spans 122 residues: Glycine cleavage system H protein (122 aa).

The region spanning 19–101 is the Lipoyl-binding domain; that stretch reads VATVGITDYA…QGKAWFFKIK (83 aa). The residue at position 60 (Lys-60) is an N6-lipoyllysine.

This sequence belongs to the GcvH family. The glycine cleavage system is composed of four proteins: P, T, L and H. Requires (R)-lipoate as cofactor.

Functionally, the glycine cleavage system catalyzes the degradation of glycine. The H protein shuttles the methylamine group of glycine from the P protein to the T protein. The polypeptide is Glycine cleavage system H protein (Bradyrhizobium diazoefficiens (strain JCM 10833 / BCRC 13528 / IAM 13628 / NBRC 14792 / USDA 110)).